The following is a 792-amino-acid chain: Probable exo-1,4-beta-xylosidase xlnD (792 aa).

The signal sequence occupies residues 1 to 20 (MSAIKSIATVLAAILPSVLA). 4 N-linked (GlcNAc...) asparagine glycosylation sites follow: asparagine 23, asparagine 87, asparagine 142, and asparagine 246. Residue aspartate 310 is part of the active site. N-linked (GlcNAc...) asparagine glycans are attached at residues asparagine 326, asparagine 385, asparagine 391, asparagine 404, asparagine 438, asparagine 475, asparagine 479, asparagine 516, asparagine 677, and asparagine 699.

It belongs to the glycosyl hydrolase 3 family.

The protein resides in the secreted. The enzyme catalyses Hydrolysis of (1-&gt;4)-beta-D-xylans, to remove successive D-xylose residues from the non-reducing termini.. Its pathway is glycan degradation; xylan degradation. Functionally, xylan 1,4-beta-xylosidase involved in the hydrolysis of xylan, a major structural heterogeneous polysaccharide found in plant biomass representing the second most abundant polysaccharide in the biosphere, after cellulose. The sequence is that of Probable exo-1,4-beta-xylosidase xlnD (xlnD) from Aspergillus clavatus (strain ATCC 1007 / CBS 513.65 / DSM 816 / NCTC 3887 / NRRL 1 / QM 1276 / 107).